A 385-amino-acid polypeptide reads, in one-letter code: Acetylornithine aminotransferase (385 aa).

Residues 94 to 95 (GT) and Phe126 each bind pyridoxal 5'-phosphate. Residue Arg129 coordinates N(2)-acetyl-L-ornithine. 211-214 (DEVQ) lines the pyridoxal 5'-phosphate pocket. Lys240 is modified (N6-(pyridoxal phosphate)lysine). N(2)-acetyl-L-ornithine is bound at residue Thr267. Residue Thr268 coordinates pyridoxal 5'-phosphate.

This sequence belongs to the class-III pyridoxal-phosphate-dependent aminotransferase family. ArgD subfamily. In terms of assembly, homodimer. Pyridoxal 5'-phosphate is required as a cofactor.

It localises to the cytoplasm. It carries out the reaction N(2)-acetyl-L-ornithine + 2-oxoglutarate = N-acetyl-L-glutamate 5-semialdehyde + L-glutamate. It functions in the pathway amino-acid biosynthesis; L-arginine biosynthesis; N(2)-acetyl-L-ornithine from L-glutamate: step 4/4. The polypeptide is Acetylornithine aminotransferase (Thermotoga maritima (strain ATCC 43589 / DSM 3109 / JCM 10099 / NBRC 100826 / MSB8)).